Here is a 72-residue protein sequence, read N- to C-terminus: uncharacterized protein (72 aa).

This is an uncharacterized protein from Homo sapiens (Human).